Reading from the N-terminus, the 155-residue chain is Alanine- and arginine-rich domain-containing protein (155 aa).

The chain is Alanine- and arginine-rich domain-containing protein (AARD) from Homo sapiens (Human).